A 149-amino-acid chain; its full sequence is Transcriptional repressor NrdR (149 aa).

The segment at 3–34 (CPFCSHQETQVVETRVSEDGDFIRRRRQCGAC) is a zinc-finger region. The region spanning 49 to 139 (PTVVKKDGRR…VYRSFEDIDE (91 aa)) is the ATP-cone domain.

It belongs to the NrdR family. The cofactor is Zn(2+).

Functionally, negatively regulates transcription of bacterial ribonucleotide reductase nrd genes and operons by binding to NrdR-boxes. This chain is Transcriptional repressor NrdR, found in Acidovorax sp. (strain JS42).